The following is a 500-amino-acid chain: MALACLNSLNANAEIFSFDTRNSLNSDTLVLFHSADSTTYSLDFLPQSTQDQLNLAVADNSFSGKRGEVLEILVPSEIDAKRVLLVGIGDAKTLTPGEINALGGNIAAKLETVPQATVRVLTQGLNNAPLFGSELAHGIELRSYRYTQFKASNRVEKNYQIGVDDLSLNQKHHKNLQAVEAGVFLARDLTNAPAGNMYPESFANEARKLKSLGVKVTVLEAKDIERLNLGALAAVGKGSERPPKLVVAHWPGSKEAPIALVGKGITFDSGGYNIKATGTSIARMKSDMAGAATVLGTVKAMAIQKAPVNLVAIMPMAENMVSGHAMIPGDVITTAQGLTVEVLNTDAEGRLVLADGLWYARENYRPSVIIDVATLTGSKVSALGTVYAGLFTDSEPLVQQLTFAGQQVGEKVWRLPLDQAYDDELKSTIADLKNTGKEGSAGASAAAMFLKRFAGDQPWAHLDIAGHALTATDTAVVPAGATGYGVRLLSTWLTQPKAQN.

The Mn(2+) site is built by Lys-263 and Asp-268. The active site involves Lys-275. Asp-287, Asp-346, and Glu-348 together coordinate Mn(2+). Arg-350 is an active-site residue.

The protein belongs to the peptidase M17 family. Mn(2+) is required as a cofactor.

It localises to the cytoplasm. The enzyme catalyses Release of an N-terminal amino acid, Xaa-|-Yaa-, in which Xaa is preferably Leu, but may be other amino acids including Pro although not Arg or Lys, and Yaa may be Pro. Amino acid amides and methyl esters are also readily hydrolyzed, but rates on arylamides are exceedingly low.. It catalyses the reaction Release of an N-terminal amino acid, preferentially leucine, but not glutamic or aspartic acids.. Functionally, presumably involved in the processing and regular turnover of intracellular proteins. Catalyzes the removal of unsubstituted N-terminal amino acids from various peptides. This chain is Probable cytosol aminopeptidase 1 (pepA1), found in Shewanella oneidensis (strain ATCC 700550 / JCM 31522 / CIP 106686 / LMG 19005 / NCIMB 14063 / MR-1).